Here is a 456-residue protein sequence, read N- to C-terminus: CBL-interacting protein kinase 16 (456 aa).

The 256-residue stretch at 22 to 277 (YELGRLLGQG…IPEIMRTPWF (256 aa)) folds into the Protein kinase domain. ATP-binding positions include 28–36 (LGQGTFAKV) and lysine 51. Aspartate 145 (proton acceptor) is an active-site residue. The tract at residues 163–192 (DFGLAALPEQLRQDGLLHTQCGTPAYVAPE) is activation loop. The region spanning 309–335 (AMSPRTCNAFQLISSMSSGFDLSGMFE) is the NAF domain. Positions 339-368 (KAATVFTSRAPAATVIQKLEAVGRSLGYSA) are PPI.

Belongs to the protein kinase superfamily. CAMK Ser/Thr protein kinase family. SNF1 subfamily. The cofactor is Mn(2+).

The enzyme catalyses L-seryl-[protein] + ATP = O-phospho-L-seryl-[protein] + ADP + H(+). The catalysed reaction is L-threonyl-[protein] + ATP = O-phospho-L-threonyl-[protein] + ADP + H(+). Functionally, CIPK serine-threonine protein kinases interact with CBL proteins. Binding of a CBL protein to the regulatory NAF domain of CIPK protein lead to the activation of the kinase in a calcium-dependent manner. The protein is CBL-interacting protein kinase 16 (CIPK16) of Oryza sativa subsp. japonica (Rice).